We begin with the raw amino-acid sequence, 359 residues long: DNA polymerase IV (359 aa).

A UmuC domain is found at 7–188; the sequence is IIHIDMDAFY…LPIGKFFGVG (182 aa). Residues D11 and D106 each coordinate Mg(2+). E107 is an active-site residue.

This sequence belongs to the DNA polymerase type-Y family. In terms of assembly, monomer. Requires Mg(2+) as cofactor.

It is found in the cytoplasm. The enzyme catalyses DNA(n) + a 2'-deoxyribonucleoside 5'-triphosphate = DNA(n+1) + diphosphate. Functionally, poorly processive, error-prone DNA polymerase involved in untargeted mutagenesis. Copies undamaged DNA at stalled replication forks, which arise in vivo from mismatched or misaligned primer ends. These misaligned primers can be extended by PolIV. Exhibits no 3'-5' exonuclease (proofreading) activity. May be involved in translesional synthesis, in conjunction with the beta clamp from PolIII. The chain is DNA polymerase IV from Clostridium perfringens (strain 13 / Type A).